Here is a 654-residue protein sequence, read N- to C-terminus: RING finger protein 112 (654 aa).

An RING-type zinc finger spans residues 80 to 121; sequence CSICLERLREPISLDCGHDFCIRCFSTHRIPGCELPCCPECR. The segment at 154–654 is interaction with ZBTB16; it reads AVRAERLLLV…GDREPLLQEE (501 aa). Residues 189-420 form the GB1/RHD3-type G domain; the sequence is DTPVCLLAVL…YILDVLSTAP (232 aa). 340–341 serves as a coordination point for GTP; the sequence is RD. 2 helical membrane passes run 570-590 and 603-623; these read LAAV…GVVG and GMVA…GGGV.

The protein belongs to the TRAFAC class dynamin-like GTPase superfamily. GB1/RHD3 GTPase family. GB1 subfamily. In terms of assembly, self-associates. Interacts with SP1 in an oxidative stress-regulated manner. Interacts with SIGMAR1 in an oxidative stress-regulated manner. Interacts with ZBTB16 (via C2H2-type zinc finger domains 1 and 2). In terms of processing, auto-ubiquitinated. In terms of tissue distribution, expressed in most of the brain areas, including cortex, striatum, hippocampus, thalamus, and cerebellum (at protein level). Expressed in lateral amygdaloid nucleus, and ventromedial hypothalamus. Also expressed strongly in the marginal zone of brain vesicles, optic stalk, and cartilage primordium.

It is found in the membrane. Its subcellular location is the cytoplasm. It localises to the nucleus. The protein localises to the nuclear body. The protein resides in the nucleoplasm. It is found in the endosome. Its subcellular location is the cytoplasmic vesicle. It localises to the secretory vesicle. The protein localises to the synaptic vesicle. The protein resides in the postsynaptic density. It is found in the perikaryon. Its subcellular location is the cell projection. It localises to the neuron projection. It carries out the reaction S-ubiquitinyl-[E2 ubiquitin-conjugating enzyme]-L-cysteine + [acceptor protein]-L-lysine = [E2 ubiquitin-conjugating enzyme]-L-cysteine + N(6)-ubiquitinyl-[acceptor protein]-L-lysine.. The protein operates within protein modification; protein ubiquitination. Functionally, E3 ubiquitin-protein ligase that plays an important role in neuronal differentiation, including neurogenesis and gliogenesis, during brain development. During embryonic development initiates neuronal differentiation by inducing cell cycle arrest at the G0/G1 phase through up-regulation of cell-cycle regulatory proteins. Plays a role not only in the fetal period during the development of the nervous system, but also in the adult brain, where it is involved in the maintenance of neural functions and protection of the nervous tissue cells from oxidative stress-induced damage. Exhibits GTPase and E3 ubiquitin-protein ligase activities. Regulates dendritic spine density and synaptic neurotransmission; its ability to hydrolyze GTP is involved in the maintenance of dendritic spine density. This is RING finger protein 112 (Rnf112) from Mus musculus (Mouse).